Here is an 804-residue protein sequence, read N- to C-terminus: Leucine--tRNA ligase (804 aa).

Residues 39 to 50 carry the 'HIGH' region motif; the sequence is PFPSGKGLHVGH. A 'KMSKS' region motif is present at residues 573–577; the sequence is KMSKS. Lysine 576 serves as a coordination point for ATP.

It belongs to the class-I aminoacyl-tRNA synthetase family.

It localises to the cytoplasm. It carries out the reaction tRNA(Leu) + L-leucine + ATP = L-leucyl-tRNA(Leu) + AMP + diphosphate. This chain is Leucine--tRNA ligase, found in Lactobacillus gasseri (strain ATCC 33323 / DSM 20243 / BCRC 14619 / CIP 102991 / JCM 1131 / KCTC 3163 / NCIMB 11718 / NCTC 13722 / AM63).